Consider the following 357-residue polypeptide: Phosphate acyltransferase (357 aa).

This sequence belongs to the PlsX family. As to quaternary structure, homodimer. Probably interacts with PlsY.

Its subcellular location is the cytoplasm. It carries out the reaction a fatty acyl-[ACP] + phosphate = an acyl phosphate + holo-[ACP]. It participates in lipid metabolism; phospholipid metabolism. In terms of biological role, catalyzes the reversible formation of acyl-phosphate (acyl-PO(4)) from acyl-[acyl-carrier-protein] (acyl-ACP). This enzyme utilizes acyl-ACP as fatty acyl donor, but not acyl-CoA. The protein is Phosphate acyltransferase of Roseobacter denitrificans (strain ATCC 33942 / OCh 114) (Erythrobacter sp. (strain OCh 114)).